A 153-amino-acid chain; its full sequence is UPF0260 protein YcgN (153 aa).

This sequence belongs to the UPF0260 family.

The polypeptide is UPF0260 protein YcgN (Shigella boydii serotype 18 (strain CDC 3083-94 / BS512)).